The primary structure comprises 207 residues: Probable HTH-type transcriptional regulator YttP (207 aa).

An HTH tetR-type domain is found at 3-63; it reads VSTKDKIIES…HLVSEFYEGY (61 aa). Residues 26–45 constitute a DNA-binding region (H-T-H motif); the sequence is SVREIAKSADVNVAHISYYF.

This Bacillus subtilis (strain 168) protein is Probable HTH-type transcriptional regulator YttP (yttP).